Here is a 331-residue protein sequence, read N- to C-terminus: ADP-L-glycero-D-manno-heptose-6-epimerase (331 aa).

Residues 11–12, 32–33, Lys-39, Lys-54, 75–79, and Asn-92 each bind NADP(+); these read FI, DN, and EGACS. Tyr-139 functions as the Proton acceptor in the catalytic mechanism. Lys-143 lines the NADP(+) pocket. Residue Asn-168 participates in substrate binding. Residues Val-169 and Lys-177 each coordinate NADP(+). The active-site Proton acceptor is Lys-177. Substrate is bound by residues Arg-179, His-186, 200 to 203, Arg-213, and Tyr-292; that span reads FGEY.

The protein belongs to the NAD(P)-dependent epimerase/dehydratase family. HldD subfamily. In terms of assembly, homopentamer. The cofactor is NADP(+).

The catalysed reaction is ADP-D-glycero-beta-D-manno-heptose = ADP-L-glycero-beta-D-manno-heptose. The protein operates within nucleotide-sugar biosynthesis; ADP-L-glycero-beta-D-manno-heptose biosynthesis; ADP-L-glycero-beta-D-manno-heptose from D-glycero-beta-D-manno-heptose 7-phosphate: step 4/4. In terms of biological role, catalyzes the interconversion between ADP-D-glycero-beta-D-manno-heptose and ADP-L-glycero-beta-D-manno-heptose via an epimerization at carbon 6 of the heptose. The sequence is that of ADP-L-glycero-D-manno-heptose-6-epimerase from Ralstonia nicotianae (strain ATCC BAA-1114 / GMI1000) (Ralstonia solanacearum).